A 545-amino-acid polypeptide reads, in one-letter code: Esterase-5C (545 aa).

An N-terminal signal peptide occupies residues 1–19; that stretch reads MLAARLIILLSFYWLSASA. Cys-84 and Cys-103 are oxidised to a cystine. Residue Asn-113 is glycosylated (N-linked (GlcNAc...) asparagine). The Acyl-ester intermediate role is filled by Ser-207. Cys-259 and Cys-271 are disulfide-bonded. Asn-421 carries an N-linked (GlcNAc...) asparagine glycan. The Charge relay system role is filled by His-467. The N-linked (GlcNAc...) asparagine glycan is linked to Asn-507. An intrachain disulfide couples Cys-515 to Cys-536.

It belongs to the type-B carboxylesterase/lipase family.

It localises to the secreted. The enzyme catalyses a carboxylic ester + H2O = an alcohol + a carboxylate + H(+). In Drosophila persimilis (Fruit fly), this protein is Esterase-5C (Est-5C).